The sequence spans 75 residues: MAERPLDVIHRSLDKDVLVILKKGFEFRGRLIGYDIHLNVVLADAEMIQDGEVVKRYGKIVIRGDNVLAISPTEE.

The 72-residue stretch at Arg4–Glu75 folds into the Sm domain.

It belongs to the snRNP Sm proteins family.

This Pyrococcus abyssi (strain GE5 / Orsay) protein is Putative snRNP Sm-like protein.